Consider the following 228-residue polypeptide: UPF0173 metal-dependent hydrolase lwe1590 (228 aa).

The protein belongs to the UPF0173 family.

This is UPF0173 metal-dependent hydrolase lwe1590 from Listeria welshimeri serovar 6b (strain ATCC 35897 / DSM 20650 / CCUG 15529 / CIP 8149 / NCTC 11857 / SLCC 5334 / V8).